The chain runs to 340 residues: Ketol-acid reductoisomerase (NADP(+)) (340 aa).

Residues 3 to 183 (VSIYYDKDCD…GGGRTGIIET (181 aa)) form the KARI N-terminal Rossmann domain. Residues 26–29 (FGSQ), Lys49, Ser54, and 84–87 (DEIQ) contribute to the NADP(+) site. The active site involves His109. NADP(+) is bound at residue Gly135. The region spanning 184–329 (TFKAETETDL…RELRAMMPWI (146 aa)) is the KARI C-terminal knotted domain. Residues Asp192, Glu196, Glu228, and Glu232 each contribute to the Mg(2+) site. Position 253 (Ser253) interacts with substrate.

Belongs to the ketol-acid reductoisomerase family. The cofactor is Mg(2+).

It carries out the reaction (2R)-2,3-dihydroxy-3-methylbutanoate + NADP(+) = (2S)-2-acetolactate + NADPH + H(+). The enzyme catalyses (2R,3R)-2,3-dihydroxy-3-methylpentanoate + NADP(+) = (S)-2-ethyl-2-hydroxy-3-oxobutanoate + NADPH + H(+). The protein operates within amino-acid biosynthesis; L-isoleucine biosynthesis; L-isoleucine from 2-oxobutanoate: step 2/4. It functions in the pathway amino-acid biosynthesis; L-valine biosynthesis; L-valine from pyruvate: step 2/4. Its function is as follows. Involved in the biosynthesis of branched-chain amino acids (BCAA). Catalyzes an alkyl-migration followed by a ketol-acid reduction of (S)-2-acetolactate (S2AL) to yield (R)-2,3-dihydroxy-isovalerate. In the isomerase reaction, S2AL is rearranged via a Mg-dependent methyl migration to produce 3-hydroxy-3-methyl-2-ketobutyrate (HMKB). In the reductase reaction, this 2-ketoacid undergoes a metal-dependent reduction by NADPH to yield (R)-2,3-dihydroxy-isovalerate. In Campylobacter lari (strain RM2100 / D67 / ATCC BAA-1060), this protein is Ketol-acid reductoisomerase (NADP(+)).